Consider the following 73-residue polypeptide: RNA-binding protein Hfq (73 aa).

The Sm domain maps to 8–68 (DQFLNQIRKD…ISTFAPQKNV (61 aa)).

The protein belongs to the Hfq family. As to quaternary structure, homohexamer.

RNA chaperone that binds small regulatory RNA (sRNAs) and mRNAs to facilitate mRNA translational regulation in response to envelope stress, environmental stress and changes in metabolite concentrations. Also binds with high specificity to tRNAs. This chain is RNA-binding protein Hfq, found in Bacillus pumilus (strain SAFR-032).